Here is a 151-residue protein sequence, read N- to C-terminus: 3-hydroxyacyl-[acyl-carrier-protein] dehydratase FabZ (151 aa).

Residue His-54 is part of the active site.

It belongs to the thioester dehydratase family. FabZ subfamily.

It is found in the cytoplasm. It catalyses the reaction a (3R)-hydroxyacyl-[ACP] = a (2E)-enoyl-[ACP] + H2O. Functionally, involved in unsaturated fatty acids biosynthesis. Catalyzes the dehydration of short chain beta-hydroxyacyl-ACPs and long chain saturated and unsaturated beta-hydroxyacyl-ACPs. The sequence is that of 3-hydroxyacyl-[acyl-carrier-protein] dehydratase FabZ from Buchnera aphidicola subsp. Acyrthosiphon pisum (strain 5A).